Consider the following 456-residue polypeptide: ACT domain-containing protein ACR5 (456 aa).

4 consecutive ACT domains span residues V39–S115, V130–R207, I271–G347, and K349–Q432.

As to expression, expressed in stems and siliques.

Its function is as follows. May bind amino acids. The chain is ACT domain-containing protein ACR5 from Arabidopsis thaliana (Mouse-ear cress).